The primary structure comprises 519 residues: Membrane-bound glycerophospholipid O-acyltransferase 2 (519 aa).

Helical transmembrane passes span 22–42 (PIDQ…AVWF), 61–81 (TLLG…HFLV), 88–108 (CIMI…FALG), 184–204 (FMGI…FIEG), 236–256 (LLVC…LPVE), and 263–283 (FQAT…LLAA). Residues N341 and H372 contribute to the active site. 3 helical membrane-spanning segments follow: residues 365 to 385 (FFLS…FLTG), 415 to 435 (LITW…FVLL), and 443 to 463 (FYSS…LLLP). Residues 497 to 519 (FSTMNNVCNQNRDTGSRHSSLTQ) are disordered.

This sequence belongs to the membrane-bound acyltransferase family. Highly expressed in epididymis, brain, testis, and ovary.

The protein resides in the endoplasmic reticulum membrane. The enzyme catalyses a 1-acyl-sn-glycero-3-phosphocholine + an acyl-CoA = a 1,2-diacyl-sn-glycero-3-phosphocholine + CoA. It carries out the reaction a 1-acyl-sn-glycero-3-phosphoethanolamine + an acyl-CoA = a 1,2-diacyl-sn-glycero-3-phosphoethanolamine + CoA. The catalysed reaction is a 1-O-(1Z-alkenyl)-sn-glycero-3-phosphocholine + (9Z)-octadecenoyl-CoA = 1-O-(1Z)-alkenyl-2-(9Z)-octadecenoyl-sn-glycero-3-phosphocholine + CoA. It catalyses the reaction a 1-O-(1Z-alkenyl)-sn-glycero-3-phosphoethanolamine + (9Z)-octadecenoyl-CoA = 1-O-(1Z)-alkenyl-2-(9Z)-octadecenoyl-sn-glycero-3-phosphoethanolamine + CoA. The enzyme catalyses 1-octadecanoyl-sn-glycero-3-phosphoethanolamine + (9Z)-octadecenoyl-CoA = 1-octadecanoyl-2-(9Z-octadecenoyl)-sn-glycero-3-phosphoethanolamine + CoA. It carries out the reaction 1-octadecanoyl-sn-glycero-3-phosphocholine + (9Z)-octadecenoyl-CoA = 1-octadecanoyl-2-(9Z-octadecenoyl)-sn-glycero-3-phosphocholine + CoA. The catalysed reaction is 1-(9Z-octadecenoyl)-sn-glycero-3-phosphoethanolamine + (9Z)-octadecenoyl-CoA = 1,2-di-(9Z-octadecenoyl)-sn-glycero-3-phosphoethanolamine + CoA. It catalyses the reaction 1-hexadecanoyl-sn-glycero-3-phosphoethanolamine + (9Z)-octadecenoyl-CoA = 1-hexadecanoyl-2-(9Z-octadecenoyl)-sn-glycero-3-phosphoethanolamine + CoA. The enzyme catalyses 1-hexadecanoyl-sn-glycero-3-phosphocholine + (9Z)-octadecenoyl-CoA = 1-hexadecanoyl-2-(9Z-octadecenoyl)-sn-glycero-3-phosphocholine + CoA. It carries out the reaction (9Z)-hexadecenoyl-CoA + 1-hexadecanoyl-sn-glycero-3-phosphocholine = 1-hexadecanoyl-2-(9Z-hexadecenoyl)-sn-glycero-3-phosphocholine + CoA. The catalysed reaction is 1-hexadecanoyl-sn-glycero-3-phosphoethanolamine + (9Z)-hexadecenoyl-CoA = 1-hexadecanoyl-2-(9Z)-hexadecenoyl-sn-glycero-3-phosphoethanolamine + CoA. It catalyses the reaction (9Z,12Z)-octadecadienoyl-CoA + 1-hexadecanoyl-sn-glycero-3-phosphocholine = 1-hexadecanoyl-2-(9Z,12Z-octadecadienoyl)-sn-glycero-3-phosphocholine + CoA. Its pathway is lipid metabolism; phospholipid metabolism. Partially inhibited by thimerosal. Its function is as follows. Acyltransferase which catalyzes the transfer of an acyl group from an acyl-CoA to a lysophospholipid leading to the production of a phospholipid and participates in the reacylation step of the phospholipid remodeling pathway also known as the Lands cycle. Catalyzes the acylation of lysophosphatidylcholine (1-acyl-sn-glycero-3-phosphocholine or LPC) and to a lesser extend lysophosphatidylethanolamine (1-acyl-sn-glycero-3-phosphoethanolamine or LPE). Does not acylates lysophosphatidic acid (LPA) and lysophosphatidylserine. Prefers oleoyl-CoA as the acyl donor. May be involved in chondrocyte differentiation. The protein is Membrane-bound glycerophospholipid O-acyltransferase 2 of Mus musculus (Mouse).